The chain runs to 468 residues: Putative amidase AmiC (468 aa).

Residues lysine 80 and serine 155 each act as charge relay system in the active site. Serine 179 acts as the Acyl-ester intermediate in catalysis.

It belongs to the amidase family.

The catalysed reaction is a monocarboxylic acid amide + H2O = a monocarboxylate + NH4(+). This is Putative amidase AmiC (amiC) from Mycobacterium leprae (strain TN).